Consider the following 111-residue polypeptide: Large ribosomal subunit protein uL22 (111 aa).

This sequence belongs to the universal ribosomal protein uL22 family. In terms of assembly, part of the 50S ribosomal subunit.

Its function is as follows. This protein binds specifically to 23S rRNA; its binding is stimulated by other ribosomal proteins, e.g. L4, L17, and L20. It is important during the early stages of 50S assembly. It makes multiple contacts with different domains of the 23S rRNA in the assembled 50S subunit and ribosome. Functionally, the globular domain of the protein is located near the polypeptide exit tunnel on the outside of the subunit, while an extended beta-hairpin is found that lines the wall of the exit tunnel in the center of the 70S ribosome. In Acholeplasma laidlawii (strain PG-8A), this protein is Large ribosomal subunit protein uL22.